The following is a 774-amino-acid chain: E3 ubiquitin-protein ligase RFWD3 (774 aa).

Serine 46 and serine 63 each carry phosphoserine; by ATM and ATR. 3 disordered regions span residues 95–116 (NPRT…PASS), 139–225 (PSSS…AEYG), and 257–280 (GGKT…ASMD). Positions 106 to 116 (SDGNHTIPASS) are enriched in polar residues. Residues 150–162 (RTRRRVSASRRAR) show a composition bias toward basic residues. Over residues 211 to 221 (SSSSDSDSDSS) the composition is skewed to low complexity. An RING-type; degenerate zinc finger spans residues 287-331 (CTICLEQWTNAGDHRLSALRCGHLFGYRCISTWLKGQVRKCPQCN). A coiled-coil region spans residues 361 to 413 (SLLKEQMLRKQAELESAQCRLQLQVLTDKCTRLQRRVQDLQKLTSHQSQNLQQ). 3 WD repeats span residues 495–537 (MHGK…QTYN), 539–577 (GRPV…SHVQ), and 583–628 (KARC…SHWP).

In terms of assembly, interacts with MDM2 and p53/TP53. Binds to the RPA complex via direct interaction with RPA2. Interacts with RAD51. Phosphorylated at Ser-46 and Ser-63 upon DNA damage by ATM or ATR. ATM phosphorylation occurs at early times upon DNA damage, while ATR is the major kinase at later times. Phosphorylation by ATM and ATR is required to stabilize p53/TP53. Part of the phosphorylation depends upon RPA2 presence.

It localises to the nucleus. It is found in the PML body. The protein resides in the cytoplasm. The enzyme catalyses S-ubiquitinyl-[E2 ubiquitin-conjugating enzyme]-L-cysteine + [acceptor protein]-L-lysine = [E2 ubiquitin-conjugating enzyme]-L-cysteine + N(6)-ubiquitinyl-[acceptor protein]-L-lysine.. It participates in protein modification; protein ubiquitination. Its function is as follows. E3 ubiquitin-protein ligase required for the repair of DNA interstrand cross-links (ICL) in response to DNA damage. Plays a key role in RPA-mediated DNA damage signaling and repair. Acts by mediating ubiquitination of the RPA complex (RPA1, RPA2 and RPA3 subunits) and RAD51 at stalled replication forks, leading to remove them from DNA damage sites and promote homologous recombination. Also mediates the ubiquitination of p53/TP53 in the late response to DNA damage, and acts as a positive regulator of p53/TP53 stability, thereby regulating the G1/S DNA damage checkpoint. May act by catalyzing the formation of short polyubiquitin chains on p53/TP53 that are not targeted to the proteasome. In response to ionizing radiation, interacts with MDM2 and enhances p53/TP53 ubiquitination, possibly by restricting MDM2 from extending polyubiquitin chains on ubiquitinated p53/TP53. Required to translesion DNA synthesis across DNA-protein cross-link adducts by catalyzing ubiquitination of proteins on single-stranded DNA (ssDNA). The protein is E3 ubiquitin-protein ligase RFWD3 of Homo sapiens (Human).